The sequence spans 350 residues: Geranylgeranyl pyrophosphate synthase (350 aa).

Isopentenyl diphosphate contacts are provided by K66, R69, and H98. The Mg(2+) site is built by D105 and D109. R114 contacts dimethylallyl diphosphate. An isopentenyl diphosphate-binding site is contributed by R115. K200, T201, Q236, N243, and K263 together coordinate dimethylallyl diphosphate.

It belongs to the FPP/GGPP synthase family. Mg(2+) is required as a cofactor.

It catalyses the reaction isopentenyl diphosphate + dimethylallyl diphosphate = (2E)-geranyl diphosphate + diphosphate. The catalysed reaction is isopentenyl diphosphate + (2E)-geranyl diphosphate = (2E,6E)-farnesyl diphosphate + diphosphate. The enzyme catalyses isopentenyl diphosphate + (2E,6E)-farnesyl diphosphate = (2E,6E,10E)-geranylgeranyl diphosphate + diphosphate. It functions in the pathway secondary metabolite biosynthesis; terpenoid biosynthesis. Functionally, geranylgeranyl pyrophosphate synthase; part of the gene cluster that mediates the biosynthesis of pleuromutilin, a tricyclic diterpene showing antibacterial properties. The geranylgeranyl diphosphate (GGPP) synthase catalyzes the first step in pleuromutilin biosynthesis. GGPP is then substrate of the premutilin synthase (PS) to yield premutilin. Premutilin synthase is a bifunctional enzyme composed of the fusion of a class II diterpene cyclase (DTC) and a class I diterpene synthase (DTS), with the corresponding domains and active sites containing characteristic aspartate-rich motifs. GGPP is first converted to mutildienyl-diphosphate (MPP) at the class II DTC site. MPP is subsequently further cyclized at the class I DTS site, followed by a 1,5-hydride shift and addition of water prior to terminating deprotonation, to yield premutilin. In addition to the aforementioned GGPP synthase and bifunctional diterpene synthase, the cluster also contains three cytochrome P450 monooxygenases, a short-chain alcohol dehydrogenase, and an acyltransferase, involved in the conversion of premutilin to pleuromutilin. The cytochrome P450 monooxygenases P450-1 and P450-2 hydroxylate premutilin at C-11 and C-3, respectively, producing 11-hydroxypremutilin and 3-hydroxypremutilin. The combination of the actions of both ple5 and ple6 leads to the production of 3,11-dihydroxypremutilin. The short chain dehydrogenase SDR further converts 3,11-dihydroxypremutilin into mutilin. The acetyltransferase ATF then acetylates mutilin to produce 14-O-acetylmutilin. Finally, the cytochrome P450 monooxygenase P450-3 catalyzes hydroxylation on the alpha position of the acetyl side chain of 14-O-acetylmutilin to yield pleuromutilin. This is Geranylgeranyl pyrophosphate synthase from Clitopilus passeckerianus (Pleurotus passeckerianus).